Reading from the N-terminus, the 893-residue chain is Beta-adaptin-like protein C (893 aa).

Residues 593 to 621 (TEDEDYVEGSETGYPEASGNPVDGAASPS) form a disordered region.

This sequence belongs to the adaptor complexes large subunit family. As to quaternary structure, adaptor protein complexes are heterotetramers composed of two large adaptins (beta-type subunit and alpha-type or delta-type or epsilon-type or gamma-type subunit), a medium adaptin (mu-type subunit) and a small adaptin (sigma-type subunit).

The protein localises to the golgi apparatus. Its subcellular location is the trans-Golgi network. It localises to the cytoplasmic vesicle. The protein resides in the clathrin-coated vesicle membrane. Functionally, subunit of clathrin-associated adaptor protein complex that plays a role in protein sorting in the late-Golgi/trans-Golgi network (TGN) and/or endosomes. The AP complexes mediate both the recruitment of clathrin to membranes and the recognition of sorting signals within the cytosolic tails of transmembrane cargo molecules. This Arabidopsis thaliana (Mouse-ear cress) protein is Beta-adaptin-like protein C (BETAC-AD).